A 1435-amino-acid polypeptide reads, in one-letter code: DNA polymerase III PolC-type (1435 aa).

In terms of domain architecture, Exonuclease spans 404–562; it reads YVVYDIETTG…YDSSVLTNIF (159 aa).

This sequence belongs to the DNA polymerase type-C family. PolC subfamily.

It is found in the cytoplasm. It carries out the reaction DNA(n) + a 2'-deoxyribonucleoside 5'-triphosphate = DNA(n+1) + diphosphate. In terms of biological role, required for replicative DNA synthesis. This DNA polymerase also exhibits 3' to 5' exonuclease activity. This Mycoplasmopsis pulmonis (strain UAB CTIP) (Mycoplasma pulmonis) protein is DNA polymerase III PolC-type.